A 272-amino-acid polypeptide reads, in one-letter code: ATP synthase subunit a (272 aa).

The next 5 membrane-spanning stretches (helical) occupy residues 41 to 61 (VLNI…LVLF), 101 to 121 (VIAP…FMDL), 147 to 167 (DVNI…FYSI), 221 to 241 (LIFI…LSVP), and 243 to 263 (AIFH…LTIV).

This sequence belongs to the ATPase A chain family. As to quaternary structure, F-type ATPases have 2 components, CF(1) - the catalytic core - and CF(0) - the membrane proton channel. CF(1) has five subunits: alpha(3), beta(3), gamma(1), delta(1), epsilon(1). CF(0) has three main subunits: a(1), b(2) and c(9-12). The alpha and beta chains form an alternating ring which encloses part of the gamma chain. CF(1) is attached to CF(0) by a central stalk formed by the gamma and epsilon chains, while a peripheral stalk is formed by the delta and b chains.

The protein resides in the cell inner membrane. Functionally, key component of the proton channel; it plays a direct role in the translocation of protons across the membrane. The protein is ATP synthase subunit a of Erwinia tasmaniensis (strain DSM 17950 / CFBP 7177 / CIP 109463 / NCPPB 4357 / Et1/99).